The sequence spans 299 residues: 4-hydroxy-tetrahydrodipicolinate synthase (299 aa).

Residue threonine 51 coordinates pyruvate. The active-site Proton donor/acceptor is tyrosine 139. The active-site Schiff-base intermediate with substrate is the lysine 167. Residue isoleucine 209 participates in pyruvate binding.

This sequence belongs to the DapA family. As to quaternary structure, homotetramer; dimer of dimers.

It localises to the cytoplasm. The enzyme catalyses L-aspartate 4-semialdehyde + pyruvate = (2S,4S)-4-hydroxy-2,3,4,5-tetrahydrodipicolinate + H2O + H(+). Its pathway is amino-acid biosynthesis; L-lysine biosynthesis via DAP pathway; (S)-tetrahydrodipicolinate from L-aspartate: step 3/4. Catalyzes the condensation of (S)-aspartate-beta-semialdehyde [(S)-ASA] and pyruvate to 4-hydroxy-tetrahydrodipicolinate (HTPA). The polypeptide is 4-hydroxy-tetrahydrodipicolinate synthase (Methylobacterium radiotolerans (strain ATCC 27329 / DSM 1819 / JCM 2831 / NBRC 15690 / NCIMB 10815 / 0-1)).